Consider the following 133-residue polypeptide: Small ribosomal subunit protein uS8 (133 aa).

Residues 1–32 (MANHDPISDMLTRIRNASEKRHESTKVPASRM) form a disordered region. The span at 16–25 (NASEKRHEST) shows a compositional bias: basic and acidic residues.

This sequence belongs to the universal ribosomal protein uS8 family. Part of the 30S ribosomal subunit. Contacts proteins S5 and S12.

In terms of biological role, one of the primary rRNA binding proteins, it binds directly to 16S rRNA central domain where it helps coordinate assembly of the platform of the 30S subunit. This is Small ribosomal subunit protein uS8 from Synechococcus sp. (strain CC9311).